The chain runs to 305 residues: Aspartate carbamoyltransferase catalytic subunit (305 aa).

The carbamoyl phosphate site is built by R60 and T61. K88 serves as a coordination point for L-aspartate. R110, H138, and Q141 together coordinate carbamoyl phosphate. L-aspartate-binding residues include R171 and R222. Carbamoyl phosphate is bound by residues A263 and P264.

The protein belongs to the aspartate/ornithine carbamoyltransferase superfamily. ATCase family. As to quaternary structure, heterododecamer (2C3:3R2) of six catalytic PyrB chains organized as two trimers (C3), and six regulatory PyrI chains organized as three dimers (R2).

The enzyme catalyses carbamoyl phosphate + L-aspartate = N-carbamoyl-L-aspartate + phosphate + H(+). It functions in the pathway pyrimidine metabolism; UMP biosynthesis via de novo pathway; (S)-dihydroorotate from bicarbonate: step 2/3. Catalyzes the condensation of carbamoyl phosphate and aspartate to form carbamoyl aspartate and inorganic phosphate, the committed step in the de novo pyrimidine nucleotide biosynthesis pathway. This chain is Aspartate carbamoyltransferase catalytic subunit, found in Halalkalibacterium halodurans (strain ATCC BAA-125 / DSM 18197 / FERM 7344 / JCM 9153 / C-125) (Bacillus halodurans).